We begin with the raw amino-acid sequence, 672 residues long: MNKDHGCGHICKEAPRGSVACECRPGFELAKNQKDCICKYELSISEVGTAYTEVRKTTTGTATGIATGTCTGTGRVKATGRGTGTDTDTGTVTARATVTARVTGTGTGTATVTETGTAKVTDTGTGTGTAKVTGTAKVTGTGTGTGTGTGTGTGTGTGTGTGTAKVTGTGTDRGTGTGTGTGTGTGTGTGTGTAKVTGTAKVTGTGTGTAKVTGTGTGTGTGTGTGTGTGTDTGTGTAKVTGTGTGTGTGTGTGTGTGTGTGTGTAKVTGTGTDRGTGTGTGTGTGTGTGTGTGTGTAKVTGTGTGTGTGTGTGTGTGTGTGTGTGTGTGSGSGTGTGTGTGSGSGTGTGTGSGSGTAKVTGTATGTGTGTDTGTGTGTGTGTGTGSGSGTAKVTGTATTTATVTETGTAKVTGTDTGTAKVTGTGTGTGTGTGTGTGTGTGTGTGTGTGTGTGTGTGTGTGTGTGSGSGTAKVTGTDTGTAKVTGTGTGTGTGTGTGTGTGTGTGTGTGSGSGSGSGSGSGSGTGTGTGLGSGSGSGTAKVTGTGTAKVTGTGTGTGTGTGSGSGSGSGSGSGSGSGSGSGSGTGTGTGLGSGSGSGSGTGTGTGTGTGTGTGTGTGTSTVTVRGTGTGTATATGTGTGTGTGTGTGTGTGTGTDTSTGTDRGTGTGTGTA.

7 stretches are compositionally biased toward gly residues: residues 141–161 (TGTG…GTGT), 171–191 (TDRG…GTGT), 215–233 (TGTG…GTDT), 243–263 (TGTG…GTGT), 273–295 (TDRG…GTGT), 303–355 (TGTG…GSGS), and 365–389 (TGTG…GSGS). 2 disordered regions span residues 141–193 (TGTG…GTGT) and 213–672 (TGTG…TGTA). A compositionally biased stretch (low complexity) spans 390–424 (GTAKVTGTATTTATVTETGTAKVTGTDTGTAKVTG). Residues 425–469 (TGTGTGTGTGTGTGTGTGTGTGTGTGTGTGTGTGTGTGTGTGSGS) are compositionally biased toward gly residues. Residues 470–486 (GTAKVTGTDTGTAKVTG) are compositionally biased toward low complexity. Residues 487–537 (TGTGTGTGTGTGTGTGTGTGTGTGSGSGSGSGSGSGSGTGTGTGLGSGSGS) show a composition bias toward gly residues. Positions 538–552 (GTAKVTGTGTAKVTG) are enriched in low complexity. The segment covering 553–617 (TGTGTGTGTG…GTGTGTGTGT (65 aa)) has biased composition (gly residues). A compositionally biased stretch (low complexity) spans 618-636 (GTSTVTVRGTGTGTATATG). Gly residues-rich tracts occupy residues 637-653 (TGTG…GTGT) and 663-672 (RGTGTGTGTA).

In Mus musculus (Mouse), this protein is Putative per-hexamer repeat protein 5 (Phxr5).